Reading from the N-terminus, the 194-residue chain is Transmembrane protein 212 (194 aa).

The next 5 membrane-spanning stretches (helical) occupy residues 11–31 (ILVT…FPVF), 44–64 (IACP…LLLA), 76–96 (ATFT…AIAL), 99–119 (ALLG…NYLG), and 148–168 (LQAL…TVFI).

The protein localises to the membrane. The chain is Transmembrane protein 212 (TMEM212) from Homo sapiens (Human).